A 419-amino-acid chain; its full sequence is Glutamate dehydrogenase (419 aa).

The active site involves lysine 105. Glycine 219–tyrosine 225 is a binding site for NAD(+).

The protein belongs to the Glu/Leu/Phe/Val dehydrogenases family. In terms of assembly, homohexamer.

It localises to the cytoplasm. The catalysed reaction is L-glutamate + NAD(+) + H2O = 2-oxoglutarate + NH4(+) + NADH + H(+). The enzyme catalyses L-glutamate + NADP(+) + H2O = 2-oxoglutarate + NH4(+) + NADPH + H(+). The chain is Glutamate dehydrogenase (gdhA) from Thermococcus litoralis (strain ATCC 51850 / DSM 5473 / JCM 8560 / NS-C).